The primary structure comprises 475 residues: Enolase (475 aa).

Residue Gln179 participates in (2R)-2-phosphoglycerate binding. The Proton donor role is filled by Glu221. The Mg(2+) site is built by Asp258, Glu312, and Asp339. Residues Lys364, Arg393, Ser394, and Lys415 each coordinate (2R)-2-phosphoglycerate. The active-site Proton acceptor is Lys364. The tract at residues 454–475 is disordered; the sequence is STPAATPKKSPAKKTTKAKSKK. Basic residues predominate over residues 463–475; sequence SPAKKTTKAKSKK.

It belongs to the enolase family. It depends on Mg(2+) as a cofactor.

It is found in the cell membrane. It localises to the cytoplasm. The protein localises to the secreted. Its subcellular location is the cell surface. It carries out the reaction (2R)-2-phosphoglycerate = phosphoenolpyruvate + H2O. It functions in the pathway carbohydrate degradation; glycolysis; pyruvate from D-glyceraldehyde 3-phosphate: step 4/5. In terms of biological role, catalyzes the reversible conversion of 2-phosphoglycerate (2-PG) into phosphoenolpyruvate (PEP). It is essential for the degradation of carbohydrates via glycolysis. Functionally, 'Moonlights' as a plasminogen receptor. Binds host (chicken) plasminogen; enolase antiserum inhibits M.gallisepticum adherence to chicken embryo fibroblasts. The polypeptide is Enolase (Mycoplasmoides gallisepticum (strain R(low / passage 15 / clone 2)) (Mycoplasma gallisepticum)).